The primary structure comprises 660 residues: Bifunctional polymyxin resistance protein ArnA (660 aa).

Positions 1-304 are formyltransferase ArnAFT; the sequence is MKTVVFAYHD…TLGLVQGSRL (304 aa). (6R)-10-formyltetrahydrofolate is bound at residue 86-88; sequence HLI. His104 functions as the Proton donor; for formyltransferase activity in the catalytic mechanism. (6R)-10-formyltetrahydrofolate-binding positions include Arg114 and 136-140; that span reads VKRAD. Residues 314–660 form a dehydrogenase ArnADH region; the sequence is RRTRVLILGV…RTVDLTDKPS (347 aa). Residues Asp347 and 368 to 369 each bind NAD(+); that span reads DI. UDP-alpha-D-glucuronate-binding positions include Ala393, Tyr398, and 432–433; that span reads TS. The Proton acceptor; for decarboxylase activity role is filled by Glu434. UDP-alpha-D-glucuronate-binding positions include Arg460, Asn492, 526-535, and Tyr613; that span reads KLIDGGKQKR. Arg619 (proton donor; for decarboxylase activity) is an active-site residue.

In the N-terminal section; belongs to the Fmt family. UDP-L-Ara4N formyltransferase subfamily. It in the C-terminal section; belongs to the NAD(P)-dependent epimerase/dehydratase family. UDP-glucuronic acid decarboxylase subfamily. In terms of assembly, homohexamer, formed by a dimer of trimers.

The catalysed reaction is UDP-alpha-D-glucuronate + NAD(+) = UDP-beta-L-threo-pentopyranos-4-ulose + CO2 + NADH. The enzyme catalyses UDP-4-amino-4-deoxy-beta-L-arabinose + (6R)-10-formyltetrahydrofolate = UDP-4-deoxy-4-formamido-beta-L-arabinose + (6S)-5,6,7,8-tetrahydrofolate + H(+). It participates in nucleotide-sugar biosynthesis; UDP-4-deoxy-4-formamido-beta-L-arabinose biosynthesis; UDP-4-deoxy-4-formamido-beta-L-arabinose from UDP-alpha-D-glucuronate: step 1/3. It functions in the pathway nucleotide-sugar biosynthesis; UDP-4-deoxy-4-formamido-beta-L-arabinose biosynthesis; UDP-4-deoxy-4-formamido-beta-L-arabinose from UDP-alpha-D-glucuronate: step 3/3. Its pathway is bacterial outer membrane biogenesis; lipopolysaccharide biosynthesis. Functionally, bifunctional enzyme that catalyzes the oxidative decarboxylation of UDP-glucuronic acid (UDP-GlcUA) to UDP-4-keto-arabinose (UDP-Ara4O) and the addition of a formyl group to UDP-4-amino-4-deoxy-L-arabinose (UDP-L-Ara4N) to form UDP-L-4-formamido-arabinose (UDP-L-Ara4FN). The modified arabinose is attached to lipid A and is required for resistance to polymyxin and cationic antimicrobial peptides. This chain is Bifunctional polymyxin resistance protein ArnA, found in Escherichia coli (strain SMS-3-5 / SECEC).